The primary structure comprises 343 residues: Probable F-box protein At1g67455 (343 aa).

The region spanning 1–46 (MMISDLPEDMVEEILSRVSIISLGALRWNDLSKARVICKAEARQQF) is the F-box domain.

The sequence is that of Probable F-box protein At1g67455 from Arabidopsis thaliana (Mouse-ear cress).